A 202-amino-acid polypeptide reads, in one-letter code: Coiled-coil domain-containing protein mdt-28 (202 aa).

Acidic residues-rich tracts occupy residues 1-15 (MFEELDAEDGGEEQE) and 28-45 (EDIDDILGDAPDLPDDEY). Positions 1–83 (MFEELDAEDG…NEDDEEPIEP (83 aa)) are disordered. Residues 159–184 (IEEENLDEAIERQETIIAAAREMLNS) adopt a coiled-coil conformation.

As to quaternary structure, interacts with mdt-6 and mdt-30. Ubiquitously expressed in tissues including epidermal, intestinal, pharyngeal and uterine, and is also expressed in vulval muscle cells and gut granules.

It is found in the nucleus. The protein resides in the cytoplasm. Functionally, plays a role in normal growth and development. This Caenorhabditis elegans protein is Coiled-coil domain-containing protein mdt-28.